We begin with the raw amino-acid sequence, 369 residues long: F-box protein UCC1 (369 aa).

The F-box domain maps to 8–45 (LMDLPLEIHLSLLEYVPNELRAVNKYFYVLHNHSYKEK).

Component of the SCF(UCC1) E3 ubiquitin-protein ligase complex composed of CDC53, SKP1, RBX1 and UCC1. Interacts with CIT2. Monoubiquitinated by UBC4.

It participates in protein modification; protein ubiquitination. Functionally, substrate recognition component of the SKP1-CUL1-F-box protein E3 ubiquitin-protein ligase complex SCF(UCC1) which mediates the ubiquitination and subsequent proteasomal degradation of target proteins. The SCF(UCC1) complex acts as a metabolic switch for the glyoxylate cycle and regulates the level of CIT2 protein to maintain citrate homeostasis. The polypeptide is F-box protein UCC1 (UCC1) (Saccharomyces cerevisiae (strain ATCC 204508 / S288c) (Baker's yeast)).